The chain runs to 427 residues: Imidazolonepropionase (427 aa).

Fe(3+) is bound by residues histidine 81 and histidine 83. The Zn(2+) site is built by histidine 81 and histidine 83. Positions 90, 153, and 186 each coordinate 4-imidazolone-5-propanoate. Residue tyrosine 153 coordinates N-formimidoyl-L-glutamate. Position 260 (histidine 260) interacts with Fe(3+). Histidine 260 contacts Zn(2+). Glutamate 263 contributes to the 4-imidazolone-5-propanoate binding site. Aspartate 335 lines the Fe(3+) pocket. Position 335 (aspartate 335) interacts with Zn(2+). Asparagine 337 and glycine 339 together coordinate N-formimidoyl-L-glutamate. A 4-imidazolone-5-propanoate-binding site is contributed by serine 340.

The protein belongs to the metallo-dependent hydrolases superfamily. HutI family. It depends on Zn(2+) as a cofactor. Fe(3+) is required as a cofactor.

It localises to the cytoplasm. The enzyme catalyses 4-imidazolone-5-propanoate + H2O = N-formimidoyl-L-glutamate. Its pathway is amino-acid degradation; L-histidine degradation into L-glutamate; N-formimidoyl-L-glutamate from L-histidine: step 3/3. Catalyzes the hydrolytic cleavage of the carbon-nitrogen bond in imidazolone-5-propanoate to yield N-formimidoyl-L-glutamate. It is the third step in the universal histidine degradation pathway. This is Imidazolonepropionase from Chloroflexus aggregans (strain MD-66 / DSM 9485).